We begin with the raw amino-acid sequence, 148 residues long: Large ribosomal subunit protein bL9 (148 aa).

Belongs to the bacterial ribosomal protein bL9 family.

Its function is as follows. Binds to the 23S rRNA. The sequence is that of Large ribosomal subunit protein bL9 from Alkaliphilus oremlandii (strain OhILAs) (Clostridium oremlandii (strain OhILAs)).